Reading from the N-terminus, the 278-residue chain is MELLEEHLCFEGWQQRWRHDSSTLNCPMTFSIFLPPPRDHTPPPVLYWLSGLTCNDENFTTKAGAQRVAAELGIVLVMPDTSPRGEQVANDDGYDLGQGAGFYLNATQPPWATHYRMYDYLRDELPALVQSQFNVSDRCAISGHSMGGHGALIMALKNPGKYTSVSAFAPIVNPCSIPWGIKAFSRYLGEDKNAWLEWDSCALMYASNAQDAIPTLIDQGDNDQFLADQLQPAVLAEAARQKAWPMTLRIQPGYDHSYYFIASFIEDHLRFHAQYLLK.

Catalysis depends on charge relay system residues serine 145, aspartate 223, and histidine 256.

This sequence belongs to the esterase D family.

The catalysed reaction is S-formylglutathione + H2O = formate + glutathione + H(+). Its function is as follows. Serine hydrolase involved in the detoxification of formaldehyde. Hydrolyzes S-formylglutathione to glutathione and formate. This Escherichia coli (strain SMS-3-5 / SECEC) protein is S-formylglutathione hydrolase YeiG (yeiG).